Consider the following 88-residue polypeptide: Small ribosomal subunit protein uS15c (88 aa).

The protein belongs to the universal ribosomal protein uS15 family. As to quaternary structure, part of the 30S ribosomal subunit.

It is found in the plastid. The protein resides in the chloroplast. The protein is Small ribosomal subunit protein uS15c (rps15) of Angiopteris evecta (Mule's foot fern).